Consider the following 250-residue polypeptide: UPF0259 membrane protein PC1_1998 (250 aa).

6 helical membrane passes run 20 to 40 (FISI…LNHA), 90 to 110 (FAAL…IQLV), 132 to 152 (LLFL…LLVI), 156 to 176 (LLAI…SGIF), 192 to 212 (ATAP…LVVS), and 222 to 242 (LGVV…IYLF).

This sequence belongs to the UPF0259 family.

The protein localises to the cell inner membrane. In Pectobacterium carotovorum subsp. carotovorum (strain PC1), this protein is UPF0259 membrane protein PC1_1998.